Consider the following 40-residue polypeptide: Dolichyl-diphosphooligosaccharide--protein glycosyltransferase subunit 4 (40 aa).

At 1–4 (MITD) the chain is on the lumenal side. A helical membrane pass occupies residues 5 to 25 (VQLAIFSNVLGVFLFLLVVAY). At 26-40 (HYINANTGKSIIKSK) the chain is on the cytoplasmic side.

It belongs to the OST4 family. In terms of assembly, component of the oligosaccharyltransferase (OST) complex.

Its subcellular location is the endoplasmic reticulum membrane. Its function is as follows. Subunit of the oligosaccharyl transferase (OST) complex that catalyzes the initial transfer of a defined glycan (Glc(3)Man(9)GlcNAc(2) in eukaryotes) from the lipid carrier dolichol-pyrophosphate to an asparagine residue within an Asn-X-Ser/Thr consensus motif in nascent polypeptide chains, the first step in protein N-glycosylation. N-glycosylation occurs cotranslationally and the complex associates with the Sec61 complex at the channel-forming translocon complex that mediates protein translocation across the endoplasmic reticulum (ER). All subunits are required for a maximal enzyme activity. The chain is Dolichyl-diphosphooligosaccharide--protein glycosyltransferase subunit 4 from Drosophila grimshawi (Hawaiian fruit fly).